The sequence spans 86 residues: Small ribosomal subunit protein uS17 (86 aa).

It belongs to the universal ribosomal protein uS17 family. As to quaternary structure, part of the 30S ribosomal subunit.

In terms of biological role, one of the primary rRNA binding proteins, it binds specifically to the 5'-end of 16S ribosomal RNA. In Helicobacter pylori (strain P12), this protein is Small ribosomal subunit protein uS17.